We begin with the raw amino-acid sequence, 464 residues long: MSVIKEYRTVSEVVGPLMIVDQVAGVHFNELVEIQLHDGSKRQGQVLEVQEDKAMVQLFEGSSGINLEKAKVRFTGRPLELPVSEDMVGRIFNGMGKPIDGGPAILPEKYLDIDGQAINPVARDYPDEFIQTGISAIDHLNTLVRGQKLPVFSGSGLPHKELAAQIARQATVLNSDENFAVVFAAMGITFEEAEFFMNDLRETGAIDRSVLFINLANDPAIERIATPRIALTAAEYLAYEKDMHVLVIMTDMTNYCEALREVSAARREVPGRRGYPGYLYTNLSTLYERAGRLVGKKGSVTQIPILSMPEDDITHPIPDLTGYITEGQIILSRDLYNSGYRPPINVLPSLSRLKDKGSGEGKTRGDHAATMNQLFAAYAQGKQAKELAVVLGESALSETDKLYVRFTDRFEQEYINQGFQTNRTIEESLDLGWELLSILPRTELKRIKDDMIDQYLPQTKEEER.

Belongs to the ATPase alpha/beta chains family.

Functionally, produces ATP from ADP in the presence of a proton gradient across the membrane. The V-type beta chain is a regulatory subunit. This is V-type ATP synthase beta chain from Streptococcus gordonii (strain Challis / ATCC 35105 / BCRC 15272 / CH1 / DL1 / V288).